The sequence spans 427 residues: 3-phosphoshikimate 1-carboxyvinyltransferase (427 aa).

Residues Lys-22, Ser-23, and Arg-27 each contribute to the 3-phosphoshikimate site. Phosphoenolpyruvate is bound at residue Lys-22. Gly-96 and Arg-124 together coordinate phosphoenolpyruvate. 7 residues coordinate 3-phosphoshikimate: Ser-169, Ser-170, Gln-171, Ser-197, Asp-313, Asn-336, and Lys-340. Gln-171 lines the phosphoenolpyruvate pocket. Catalysis depends on Asp-313, which acts as the Proton acceptor. Residues Arg-344, Arg-386, and Lys-411 each coordinate phosphoenolpyruvate.

It belongs to the EPSP synthase family. In terms of assembly, monomer.

Its subcellular location is the cytoplasm. The catalysed reaction is 3-phosphoshikimate + phosphoenolpyruvate = 5-O-(1-carboxyvinyl)-3-phosphoshikimate + phosphate. It participates in metabolic intermediate biosynthesis; chorismate biosynthesis; chorismate from D-erythrose 4-phosphate and phosphoenolpyruvate: step 6/7. Catalyzes the transfer of the enolpyruvyl moiety of phosphoenolpyruvate (PEP) to the 5-hydroxyl of shikimate-3-phosphate (S3P) to produce enolpyruvyl shikimate-3-phosphate and inorganic phosphate. This Escherichia coli O127:H6 (strain E2348/69 / EPEC) protein is 3-phosphoshikimate 1-carboxyvinyltransferase.